Reading from the N-terminus, the 211-residue chain is ATP phosphoribosyltransferase (211 aa).

It belongs to the ATP phosphoribosyltransferase family. Short subfamily. In terms of assembly, heteromultimer composed of HisG and HisZ subunits.

The protein resides in the cytoplasm. The enzyme catalyses 1-(5-phospho-beta-D-ribosyl)-ATP + diphosphate = 5-phospho-alpha-D-ribose 1-diphosphate + ATP. It functions in the pathway amino-acid biosynthesis; L-histidine biosynthesis; L-histidine from 5-phospho-alpha-D-ribose 1-diphosphate: step 1/9. Functionally, catalyzes the condensation of ATP and 5-phosphoribose 1-diphosphate to form N'-(5'-phosphoribosyl)-ATP (PR-ATP). Has a crucial role in the pathway because the rate of histidine biosynthesis seems to be controlled primarily by regulation of HisG enzymatic activity. This is ATP phosphoribosyltransferase from Pseudomonas syringae pv. syringae (strain B728a).